Consider the following 3678-residue polypeptide: Dystrophin (3678 aa).

The segment at 1–240 is actin-binding; the sequence is MLWWEEVEDC…YITSLFQVLP (240 aa). 2 Calponin-homology (CH) domains span residues 15–119 and 134–240; these read DVQK…LHWQ and TNSE…QVLP. The segment at 63–72 is ANK2- and ANK-3 binding; sequence PKEKGSTRVH. The segment at 313-333 is disordered; sequence DSTQSPYPSQHLEAPRDKSLD. Spectrin repeat units lie at residues 341–449, 450–558, 561–669, 721–830, 832–936, 945–1047, 1050–1156, 1159–1265, 1268–1369, 1370–1465, 1470–1570, 1573–1678, 1681–1780, 1781–1876, 1879–1981, 1994–2103, 2106–2210, 2213–2318, 2319–2416, 2468–2570, 2573–2679, 2682–2795, 2801–2923, and 2928–3033; these read VNLD…KLHK, VLMD…VLQD, LKWQ…QISQ, ELRK…WLEY, TNII…ELQT, RYQE…KLEE, NKLR…ALKA, DKTV…TLEE, ACWH…LLEQ, SIQS…LFQK, EQRL…QLEK, KLSR…LLLE, KHME…KASI, PLKE…KALE, HQWY…TLHE, DVSY…RFDR, EKWR…RIEE, NVLS…ELEV, HLKD…LRTK, FNRA…QLNE, KDST…ALEE, RLLQ…HLEA, KRLH…RKID, and RLQE…QLHE. The interaction with SYNM stretch occupies residues 1417-1915; sequence SDLTSHEISL…PEPRDERKLK (499 aa). One can recognise a WW domain in the interval 3048–3081; the sequence is TSVQGPWERAISPNKVPYYINHETQTTCWDHPKM. The tract at residues 3051-3401 is interaction with SYNM; the sequence is QGPWERAISP…TVLEGDNMET (351 aa). Residues 3301 to 3357 form a ZZ-type; degenerate zinc finger; that stretch reads KHQAKCNICKECPIIGFRYRSLKHFNYDICQSCFFSGRVAKGHKMHYPMVEYCTPTT. Cysteine 3306, cysteine 3309, cysteine 3330, and cysteine 3333 together coordinate Zn(2+). The interval 3459-3511 is binds to SNTB1; it reads DDEHLLIQHYCQSLNQDSPLSQPRSPAQILISLESEERGELERILADLEEENR. Residues serine 3476, serine 3483, and serine 3493 each carry the phosphoserine modification. Disordered stretches follow at residues 3521–3547 and 3596–3678; these read KQQH…QSPR and EAKV…EDTM. 2 stretches are compositionally biased toward polar residues: residues 3600–3619 and 3655–3665; these read NGTT…SSQP and QLNNSFPSSRG. Residues serine 3605, serine 3606, serine 3610, serine 3616, serine 3617, and serine 3659 each carry the phosphoserine modification.

In terms of assembly, interacts with SYNM. Interacts with the syntrophins SNTG1 and SNTG2. Interacts with KRT19. Component of the dystrophin-associated glycoprotein complex which is composed of three subcomplexes: a cytoplasmic complex comprised of DMD (or UTRN), DTNA and a number of syntrophins, such as SNTB1, SNTB2, SNTG1 and SNTG2, the transmembrane dystroglycan complex, and the sarcoglycan-sarcospan complex. Interacts with DAG1 (betaDAG1) with DMD; the interaction is inhibited by phosphorylation on the PPXY motif of DAG1. Interacts with SYNM; SNTA1 and SNTB1. Interacts with CMYA5. Directly interacts with ANK2 and ANK3; these interactions do not interfere with betaDAG1-binding and are necessary for proper localization in muscle cells. Identified in a dystroglycan complex that contains at least PRX, DRP2, UTRN, DMD and DAG1. Interacts with DTNB. Interacts with PGM5; the interaction is direct. Interacts with NOS1; localizes NOS1 to sarcolemma in muscle cells. Detected in quadriceps muscle and in sciatic nerve (at protein level). Expressed in the sarcolemma of the soleus muscle (at protein level). Differentially expressed during skeletal muscle, heart, and brain development. Also expressed in retina.

It is found in the cell membrane. The protein resides in the sarcolemma. It localises to the cytoplasm. The protein localises to the cytoskeleton. Its subcellular location is the postsynaptic cell membrane. Anchors the extracellular matrix to the cytoskeleton via F-actin. Ligand for dystroglycan. Component of the dystrophin-associated glycoprotein complex which accumulates at the neuromuscular junction (NMJ) and at a variety of synapses in the peripheral and central nervous systems and has a structural function in stabilizing the sarcolemma. Also implicated in signaling events and synaptic transmission. The sequence is that of Dystrophin (Dmd) from Mus musculus (Mouse).